The sequence spans 210 residues: Adenylate kinase (210 aa).

Gly10–Thr15 is an ATP binding site. The tract at residues Ser28–Val57 is NMP. AMP contacts are provided by residues Arg34, Lys55–Val57, Gly83–Arg86, and Gln90. The interval Gly120–Asp158 is LID. Arg121 is a binding site for ATP. The Zn(2+) site is built by Cys124 and Cys127. Ile130 to Tyr131 is a binding site for ATP. Zn(2+) is bound by residues Cys144 and Cys147. Positions 155 and 166 each coordinate AMP. An ATP-binding site is contributed by Gln194.

This sequence belongs to the adenylate kinase family. In terms of assembly, monomer.

The protein resides in the cytoplasm. It catalyses the reaction AMP + ATP = 2 ADP. It participates in purine metabolism; AMP biosynthesis via salvage pathway; AMP from ADP: step 1/1. Catalyzes the reversible transfer of the terminal phosphate group between ATP and AMP. Plays an important role in cellular energy homeostasis and in adenine nucleotide metabolism. The protein is Adenylate kinase of Orientia tsutsugamushi (strain Boryong) (Rickettsia tsutsugamushi).